The following is a 509-amino-acid chain: Midnolin (509 aa).

Positions 1 to 12 (MDQHPSARSCSS) are enriched in polar residues. The segment at 1 to 27 (MDQHPSARSCSSRGAAPSCESVSGEPP) is disordered. The 75-residue stretch at 28 to 102 (MNLYIHSTTG…LTLVPTVEAG (75 aa)) folds into the Ubiquitin-like domain. Disordered regions lie at residues 172–295 (GSSE…NTPL), 370–404 (QCTS…ETQP), and 448–485 (KRLR…EGSL). Over residues 176–190 (GTTGLSHGASGSASG) the composition is skewed to low complexity. Residues 196–209 (HNPHPHHPHQHPHH) are compositionally biased toward basic residues. Pro residues predominate over residues 220-231 (AFPPSPSIPSIP). A compositionally biased stretch (low complexity) spans 261–285 (PSSACAPSPSSPSPAASCPEASCSA). Positions 286-295 (KTSGNCNTPL) are enriched in polar residues. A compositionally biased stretch (pro residues) spans 376-386 (SPAPSPPPSPP). Residues 387–400 (HTTGLTGLPTTVPS) are compositionally biased toward low complexity.

Its subcellular location is the nucleus. It is found in the cytoplasm. The protein localises to the cytosol. It localises to the nucleolus. Functionally, facilitates ubiquitin-independent proteasomal degradation of polycomb protein CBX4. Plays a role in inhibiting the activity of glucokinase GCK and both glucose-induced and basal insulin secretion. The sequence is that of Midnolin (midn) from Danio rerio (Zebrafish).